Reading from the N-terminus, the 413-residue chain is Tyrosine--tRNA ligase (413 aa).

An L-tyrosine-binding site is contributed by Tyr34. The 'HIGH' region signature appears at 39–48 (CTAQSLHVGN). L-tyrosine is bound by residues Tyr171 and Gln175. Positions 231–235 (KMGKT) match the 'KMSKS' region motif. Residue Lys234 coordinates ATP. The 66-residue stretch at 346–411 (IPITELLVTI…GKKCHILVKI (66 aa)) folds into the S4 RNA-binding domain.

Belongs to the class-I aminoacyl-tRNA synthetase family. TyrS type 1 subfamily. As to quaternary structure, homodimer.

The protein localises to the cytoplasm. The enzyme catalyses tRNA(Tyr) + L-tyrosine + ATP = L-tyrosyl-tRNA(Tyr) + AMP + diphosphate + H(+). Its function is as follows. Catalyzes the attachment of tyrosine to tRNA(Tyr) in a two-step reaction: tyrosine is first activated by ATP to form Tyr-AMP and then transferred to the acceptor end of tRNA(Tyr). The protein is Tyrosine--tRNA ligase of Orientia tsutsugamushi (strain Boryong) (Rickettsia tsutsugamushi).